Reading from the N-terminus, the 218-residue chain is Small ribosomal subunit protein uS3c (218 aa).

One can recognise a KH type-2 domain in the interval 47-118; that stretch reads VQKNMRTSSG…KLNIAVTRIA (72 aa).

It belongs to the universal ribosomal protein uS3 family. As to quaternary structure, part of the 30S ribosomal subunit.

The protein resides in the plastid. Its subcellular location is the chloroplast. This Solanum bulbocastanum (Wild potato) protein is Small ribosomal subunit protein uS3c (rps3).